Consider the following 447-residue polypeptide: D-ribitol-5-phosphate cytidylyltransferase (447 aa).

This sequence belongs to the IspD/TarI cytidylyltransferase family. IspD subfamily. As to quaternary structure, homodimer.

Its subcellular location is the cytoplasm. It is found in the cytosol. It carries out the reaction D-ribitol 5-phosphate + CTP + H(+) = CDP-L-ribitol + diphosphate. It catalyses the reaction D-ribose 5-phosphate + CTP + H(+) = CDP-D-ribose + diphosphate. The enzyme catalyses D-ribulose 5-phosphate + CTP + H(+) = CDP-D-ribulose + diphosphate. It participates in protein modification; protein glycosylation. Functionally, cytidylyltransferase required for protein O-linked mannosylation. Catalyzes the formation of CDP-ribitol nucleotide sugar from D-ribitol 5-phosphate. CDP-ribitol is a substrate of FKTN during the biosynthesis of the phosphorylated O-mannosyl trisaccharide (N-acetylgalactosamine-beta-3-N-acetylglucosamine-beta-4-(phosphate-6-)mannose), a carbohydrate structure present in alpha-dystroglycan (DAG1), which is required for binding laminin G-like domain-containing extracellular proteins with high affinity. Shows activity toward other pentose phosphate sugars and mediates formation of CDP-ribulose or CDP-ribose using CTP and ribulose-5-phosphate or ribose-5-phosphate, respectively. Not involved in dolichol production. The polypeptide is D-ribitol-5-phosphate cytidylyltransferase (Crppa) (Mus musculus (Mouse)).